The sequence spans 355 residues: Uroporphyrinogen decarboxylase (355 aa).

Residues 27 to 31, D77, Y154, T209, and H327 each bind substrate; that span reads RQAGR.

It belongs to the uroporphyrinogen decarboxylase family. Homodimer.

Its subcellular location is the cytoplasm. The enzyme catalyses uroporphyrinogen III + 4 H(+) = coproporphyrinogen III + 4 CO2. It participates in porphyrin-containing compound metabolism; protoporphyrin-IX biosynthesis; coproporphyrinogen-III from 5-aminolevulinate: step 4/4. Catalyzes the decarboxylation of four acetate groups of uroporphyrinogen-III to yield coproporphyrinogen-III. This chain is Uroporphyrinogen decarboxylase, found in Erwinia tasmaniensis (strain DSM 17950 / CFBP 7177 / CIP 109463 / NCPPB 4357 / Et1/99).